The chain runs to 520 residues: RNA-binding protein MEX3A (520 aa).

The disordered stretch occupies residues 49–111 (GLGEPPAPTA…QPPTAPKGAS (63 aa)). The span at 60-69 (EDGGGGGGGA) shows a compositional bias: gly residues. The segment covering 73-91 (PAAPPQPAPPPPPAAPPAA) has biased composition (pro residues). KH domains lie at 132 to 193 (TTEC…RREI) and 223 to 284 (QVTI…REEI). S338 is subject to Phosphoserine. Positions 412-461 (SSSSAKARAGPPGAHRSPATSAGPELAGLPRRPPGEPLQGFSKLGGGGLR) are disordered. S462 carries the phosphoserine modification. Residues 469-509 (CMVCFESEVTAALVPCGHNLFCMECAVRICERTDPECPVCH) form an RING-type zinc finger.

In terms of processing, phosphorylated. Highest levels found in fetal brain and testis. Detected also in thymus, salivary gland and uterus.

The protein localises to the cytoplasm. Its subcellular location is the nucleus. The protein resides in the P-body. Functionally, RNA binding protein, may be involved in post-transcriptional regulatory mechanisms. The protein is RNA-binding protein MEX3A (MEX3A) of Homo sapiens (Human).